The chain runs to 96 residues: ESAT-6-like protein EsxR (96 aa).

This sequence belongs to the WXG100 family. ESAT-6 subfamily.

The protein localises to the secreted. This Mycobacterium leprae (strain TN) protein is ESAT-6-like protein EsxR.